The following is a 784-amino-acid chain: MPRALWTAWVWAVIILSMEGASHQASSLSCDPTGVCDGHSRSLNSIPSGLTDGVKSLDLSNNEITYVSNRDLQRCVNLKTLRLGANEIHTVEEDSFFHLRNLEYLDLSYNRLSNLSSSWFRSLYALKFLNLLGNVYKTLGETSLFSHLPNLRTLKVGNSNSFTEIHEKDFTGLIFLEELEISAQNLQIYVPKSLKSIQNISHLILHLKQPVLLVDILVDIVSSLDCLELRDTNLHTFHFSEASISEMNTSVKKLIFRNVQFTDESFVEVVKLFNYVSGILEVEFDDCTHDGIGDFRALSLDRIRHLGNVETLTIRKLHIPQFFLFHDLSSIYPLTGKVKRVTIESSKVFLVPCLLSQHLKSLEYLDLSENLMSEETLKNSACKDAWPFLQTLVLRQNRLKSLEKTGELLLTLKNLNNLDISKNNFLSMPETCQWPGKMKQLNLSSTRIHSLTQCLPQTLEILDVSNNNLDSFSLILPQLKELYISRNKLKTLPDASFLPVLSVMRISGNIINTFSKEQLDSFPQLKALEAGGNNFICSCDFLSFTQGQQALARVLVDWPDGYRCDAPSHVRGQRVQDARLSLSECHRAAVVSAVCCALFLLLLLTGVLCHRFHGLWYMKMMWAWLQAKRKPRKAPRRDLCYDAFVSYSEQDSYWVENLMVQELEHFNPPFKLCLHKRDFVPGKWIIDNIIDSIEKSRKTIFVLSENFVRSEWCKYELDFSHFRLFDENNDAAILILLEPIDKKAIPQRFCKLRKIMNTKTYLEWPTDETQQEAFWLNLRAAIRS.

A signal peptide spans M1–G20. Residues A21–R587 lie on the Extracellular side of the membrane. A disulfide bridge links C30 with C36. LRR repeat units follow at residues V54 to N77, L78 to N101, L102 to A125, L126 to N150, L151 to F175, L176 to N199, I200 to S223, L224 to S250, V251 to G278, I279 to N308, V309 to K337, V338 to S361, L362 to F388, L389 to N414, L415 to K437, M438 to Q457, T458 to Q478, L479 to V500, and L501 to Q524. An N-linked (GlcNAc...) asparagine glycan is attached at N114. N199 carries N-linked (GlcNAc...) asparagine glycosylation. N248 carries an N-linked (GlcNAc...) asparagine glycan. A disulfide bridge connects residues C353 and C382. The cysteines at positions 432 and 454 are disulfide-linked. N442 carries N-linked (GlcNAc...) asparagine glycosylation. An LRRCT domain is found at L525–R579. Residues A588–L608 traverse the membrane as a helical segment. Residues C609–S784 are Cytoplasmic-facing. Residues L639 to I782 enclose the TIR domain. K754 participates in a covalent cross-link: Glycyl lysine isopeptide (Lys-Gly) (interchain with G-Cter in ubiquitin). The ATG16L1-binding motif motif lies at Y761–L778.

Belongs to the Toll-like receptor family. Interacts with LY96, TLR1 and TLR6 (via extracellular domain). TLR2 seems to exist in heterodimers with either TLR1 or TLR6 before stimulation by the ligand. The heterodimers form bigger oligomers in response to their corresponding ligands as well as further heterotypic associations with other receptors such as CD14 and/or CD36. Binds MYD88 (via TIR domain). Interacts with TICAM1. Interacts with CNPY3. Interacts with ATG16L1. Interacts with PPP1R11. Interacts with TICAM2. Interacts with TIRAP. Post-translationally, ubiquitinated at Lys-754 by PPP1R11, leading to its degradation. Deubiquitinated by USP2. In terms of processing, glycosylation of Asn-442 is critical for secretion of the N-terminal ectodomain of TLR2.

It localises to the membrane. It is found in the cytoplasmic vesicle. The protein resides in the phagosome membrane. Its subcellular location is the membrane raft. Cooperates with LY96 to mediate the innate immune response to bacterial lipoproteins and other microbial cell wall components. Cooperates with TLR1 or TLR6 to mediate the innate immune response to bacterial lipoproteins or lipopeptides. Acts via MYD88 and TRAF6, leading to NF-kappa-B activation, cytokine secretion and the inflammatory response. May also promote apoptosis in response to lipoproteins. Forms activation clusters composed of several receptors depending on the ligand, these clusters trigger signaling from the cell surface and subsequently are targeted to the Golgi in a lipid-raft dependent pathway. Forms the cluster TLR2:TLR6:CD14:CD36 in response to diacylated lipopeptides and TLR2:TLR1:CD14 in response to triacylated lipopeptides. The protein is Toll-like receptor 2 (TLR2) of Capra hircus (Goat).